We begin with the raw amino-acid sequence, 467 residues long: Asparagine--tRNA ligase (467 aa).

It belongs to the class-II aminoacyl-tRNA synthetase family. In terms of assembly, homodimer.

The protein localises to the cytoplasm. It carries out the reaction tRNA(Asn) + L-asparagine + ATP = L-asparaginyl-tRNA(Asn) + AMP + diphosphate + H(+). This chain is Asparagine--tRNA ligase, found in Mannheimia succiniciproducens (strain KCTC 0769BP / MBEL55E).